Here is a 188-residue protein sequence, read N- to C-terminus: GMP synthase [glutamine-hydrolyzing] subunit A (188 aa).

The Glutamine amidotransferase type-1 domain maps to 3–188; sequence PLYVVNNYGQ…FSICTGQNKG (186 aa). C75 serves as the catalytic Nucleophile. Residues H162 and E164 contribute to the active site.

As to quaternary structure, heterodimer composed of a glutamine amidotransferase subunit (A) and a GMP-binding subunit (B).

The catalysed reaction is XMP + L-glutamine + ATP + H2O = GMP + L-glutamate + AMP + diphosphate + 2 H(+). The protein operates within purine metabolism; GMP biosynthesis; GMP from XMP (L-Gln route): step 1/1. Its function is as follows. Catalyzes the synthesis of GMP from XMP. This chain is GMP synthase [glutamine-hydrolyzing] subunit A, found in Methanospirillum hungatei JF-1 (strain ATCC 27890 / DSM 864 / NBRC 100397 / JF-1).